The chain runs to 252 residues: Tabtoxin biosynthesis enzyme (252 aa).

The interval 1–23 (MYQRTATQLARKPASKQGETEMN) is disordered.

In terms of biological role, may play a role in tabtoxin biosynthesis. This Pseudomonas amygdali pv. tabaci (Pseudomonas syringae pv. tabaci) protein is Tabtoxin biosynthesis enzyme (tblA).